We begin with the raw amino-acid sequence, 432 residues long: Adenylosuccinate synthetase (432 aa).

Residues 13–19 (GDEGKGK) and 41–43 (GHT) contribute to the GTP site. Asp-14 acts as the Proton acceptor in catalysis. Asp-14 and Gly-41 together coordinate Mg(2+). IMP contacts are provided by residues 14-17 (DEGK), 39-42 (NAGH), Thr-130, Arg-144, Gln-225, Thr-240, and Arg-304. The active-site Proton donor is His-42. Residue 300–306 (ATTGRRR) coordinates substrate. GTP-binding positions include Arg-306, 332-334 (KLD), and 415-417 (STG).

The protein belongs to the adenylosuccinate synthetase family. In terms of assembly, homodimer. The cofactor is Mg(2+).

The protein localises to the cytoplasm. The catalysed reaction is IMP + L-aspartate + GTP = N(6)-(1,2-dicarboxyethyl)-AMP + GDP + phosphate + 2 H(+). The protein operates within purine metabolism; AMP biosynthesis via de novo pathway; AMP from IMP: step 1/2. Its function is as follows. Plays an important role in the de novo pathway of purine nucleotide biosynthesis. Catalyzes the first committed step in the biosynthesis of AMP from IMP. This Salmonella paratyphi A (strain AKU_12601) protein is Adenylosuccinate synthetase.